The sequence spans 450 residues: Phosphoglucosamine mutase (450 aa).

S101 serves as the catalytic Phosphoserine intermediate. Positions 101, 242, 244, and 246 each coordinate Mg(2+). S101 carries the phosphoserine modification.

This sequence belongs to the phosphohexose mutase family. It depends on Mg(2+) as a cofactor. Post-translationally, activated by phosphorylation.

The enzyme catalyses alpha-D-glucosamine 1-phosphate = D-glucosamine 6-phosphate. Functionally, catalyzes the conversion of glucosamine-6-phosphate to glucosamine-1-phosphate. The polypeptide is Phosphoglucosamine mutase (Rhodopseudomonas palustris (strain BisA53)).